Reading from the N-terminus, the 350-residue chain is Methionine import ATP-binding protein MetN (350 aa).

The 240-residue stretch at 2–241 (IQIKNLKKEY…PQAPVTRSFV (240 aa)) folds into the ABC transporter domain. 38 to 45 (GHSGAGKS) contributes to the ATP binding site.

It belongs to the ABC transporter superfamily. Methionine importer (TC 3.A.1.24) family. In terms of assembly, the complex is composed of two ATP-binding proteins (MetN), two transmembrane proteins (MetI) and a solute-binding protein (MetQ).

Its subcellular location is the cell inner membrane. The catalysed reaction is L-methionine(out) + ATP + H2O = L-methionine(in) + ADP + phosphate + H(+). It carries out the reaction D-methionine(out) + ATP + H2O = D-methionine(in) + ADP + phosphate + H(+). Its function is as follows. Part of the ABC transporter complex MetNIQ involved in methionine import. Responsible for energy coupling to the transport system. This Francisella tularensis subsp. holarctica (strain LVS) protein is Methionine import ATP-binding protein MetN.